The sequence spans 329 residues: Holliday junction branch migration complex subunit RuvB (329 aa).

A large ATPase domain (RuvB-L) region spans residues 1–181; that stretch reads MNELLHQHKA…FGIPLHLEFY (181 aa). Residues Leu20, Arg21, Gly62, Lys65, Thr66, Thr67, Arg171, Tyr181, and Arg218 each contribute to the ATP site. Thr66 lines the Mg(2+) pocket. Residues 182–252 are small ATPAse domain (RuvB-S); the sequence is SVEELMLVIK…FADSALFNLG (71 aa). The segment at 255–329 is head domain (RuvB-H); it reads KSGLDKMDIK…IEHLMNYKYI (75 aa). Positions 308 and 313 each coordinate DNA.

Belongs to the RuvB family. In terms of assembly, homohexamer. Forms an RuvA(8)-RuvB(12)-Holliday junction (HJ) complex. HJ DNA is sandwiched between 2 RuvA tetramers; dsDNA enters through RuvA and exits via RuvB. An RuvB hexamer assembles on each DNA strand where it exits the tetramer. Each RuvB hexamer is contacted by two RuvA subunits (via domain III) on 2 adjacent RuvB subunits; this complex drives branch migration. In the full resolvosome a probable DNA-RuvA(4)-RuvB(12)-RuvC(2) complex forms which resolves the HJ.

The protein resides in the cytoplasm. It carries out the reaction ATP + H2O = ADP + phosphate + H(+). In terms of biological role, the RuvA-RuvB-RuvC complex processes Holliday junction (HJ) DNA during genetic recombination and DNA repair, while the RuvA-RuvB complex plays an important role in the rescue of blocked DNA replication forks via replication fork reversal (RFR). RuvA specifically binds to HJ cruciform DNA, conferring on it an open structure. The RuvB hexamer acts as an ATP-dependent pump, pulling dsDNA into and through the RuvAB complex. RuvB forms 2 homohexamers on either side of HJ DNA bound by 1 or 2 RuvA tetramers; 4 subunits per hexamer contact DNA at a time. Coordinated motions by a converter formed by DNA-disengaged RuvB subunits stimulates ATP hydrolysis and nucleotide exchange. Immobilization of the converter enables RuvB to convert the ATP-contained energy into a lever motion, pulling 2 nucleotides of DNA out of the RuvA tetramer per ATP hydrolyzed, thus driving DNA branch migration. The RuvB motors rotate together with the DNA substrate, which together with the progressing nucleotide cycle form the mechanistic basis for DNA recombination by continuous HJ branch migration. Branch migration allows RuvC to scan DNA until it finds its consensus sequence, where it cleaves and resolves cruciform DNA. The sequence is that of Holliday junction branch migration complex subunit RuvB from Anaplasma phagocytophilum (strain HZ).